We begin with the raw amino-acid sequence, 290 residues long: Inner membrane protein YebZ (290 aa).

The Periplasmic portion of the chain corresponds to 1 to 10 (MLAFTWIALR). The helical transmembrane segment at 11–31 (FIHFTSLMLVFGFAMYGAWLA) threads the bilayer. The Cytoplasmic segment spans residues 32 to 49 (PLTIRRLLAKRFLRLQQH). The chain crosses the membrane as a helical span at residues 50–70 (AAVWSLISATAMLAVQGGLMG). The Periplasmic portion of the chain corresponds to 71–89 (TGWTDVFSPNIWQAVLQTQ). A helical transmembrane segment spans residues 90-110 (FGGIWLWQIVLALVTLIVALM). Residues 111 to 117 (QPRNMPR) are Cytoplasmic-facing. Residues 118–138 (LLFMLTTAQFILLAGVGHATL) traverse the membrane as a helical segment. At 139 to 151 (NEGVTAKIHQTNH) the chain is on the periplasmic side. Residues 152–172 (AIHLICAAAWFGGLLPVLWCM) form a helical membrane-spanning segment. Topologically, residues 173 to 195 (QLIKGRWRHQAIQALMRFSWCGH) are cytoplasmic. Residues 196 to 216 (FAVIGVLASGVLNALLITGFP) traverse the membrane as a helical segment. Topologically, residues 217-222 (PTLTTY) are periplasmic. The helical transmembrane segment at 223–243 (WGQLLLLKAILVMIMVVIALA) threads the bilayer. Topologically, residues 244–260 (NRYVLVPRMRQDEDRAA) are cytoplasmic. A helical transmembrane segment spans residues 261 to 281 (PWFVWMTKLEWAIGAVVLVII). The Periplasmic portion of the chain corresponds to 282–290 (SLLATLEPF).

The protein belongs to the CopD family.

The protein resides in the cell inner membrane. The polypeptide is Inner membrane protein YebZ (yebZ) (Escherichia coli (strain K12)).